A 242-amino-acid chain; its full sequence is Biosynthetic peptidoglycan transglycosylase (242 aa).

Residues 19 to 39 (ILAALAVFWGGGIALFSVVPV) traverse the membrane as a helical segment.

It belongs to the glycosyltransferase 51 family.

Its subcellular location is the cell inner membrane. It catalyses the reaction [GlcNAc-(1-&gt;4)-Mur2Ac(oyl-L-Ala-gamma-D-Glu-L-Lys-D-Ala-D-Ala)](n)-di-trans,octa-cis-undecaprenyl diphosphate + beta-D-GlcNAc-(1-&gt;4)-Mur2Ac(oyl-L-Ala-gamma-D-Glu-L-Lys-D-Ala-D-Ala)-di-trans,octa-cis-undecaprenyl diphosphate = [GlcNAc-(1-&gt;4)-Mur2Ac(oyl-L-Ala-gamma-D-Glu-L-Lys-D-Ala-D-Ala)](n+1)-di-trans,octa-cis-undecaprenyl diphosphate + di-trans,octa-cis-undecaprenyl diphosphate + H(+). Its pathway is cell wall biogenesis; peptidoglycan biosynthesis. Peptidoglycan polymerase that catalyzes glycan chain elongation from lipid-linked precursors. This Salmonella paratyphi B (strain ATCC BAA-1250 / SPB7) protein is Biosynthetic peptidoglycan transglycosylase.